Consider the following 454-residue polypeptide: UDP-N-acetylmuramate--L-alanine ligase (454 aa).

113–119 serves as a coordination point for ATP; the sequence is GSHGKTT.

This sequence belongs to the MurCDEF family.

It is found in the cytoplasm. The catalysed reaction is UDP-N-acetyl-alpha-D-muramate + L-alanine + ATP = UDP-N-acetyl-alpha-D-muramoyl-L-alanine + ADP + phosphate + H(+). It functions in the pathway cell wall biogenesis; peptidoglycan biosynthesis. Cell wall formation. The chain is UDP-N-acetylmuramate--L-alanine ligase from Aquifex aeolicus (strain VF5).